The sequence spans 591 residues: Aspartate--tRNA(Asp/Asn) ligase (591 aa).

L-aspartate is bound at residue Glu-175. The tract at residues 199–202 (QQFK) is aspartate. Arg-221 and His-453 together coordinate L-aspartate. 221–223 (RDE) lines the ATP pocket. Glu-486 serves as a coordination point for ATP. Residue Arg-493 participates in L-aspartate binding. 538–541 (GIDR) contributes to the ATP binding site.

The protein belongs to the class-II aminoacyl-tRNA synthetase family. Type 1 subfamily. Homodimer.

The protein localises to the cytoplasm. It carries out the reaction tRNA(Asx) + L-aspartate + ATP = L-aspartyl-tRNA(Asx) + AMP + diphosphate. Its function is as follows. Aspartyl-tRNA synthetase with relaxed tRNA specificity since it is able to aspartylate not only its cognate tRNA(Asp) but also tRNA(Asn). Reaction proceeds in two steps: L-aspartate is first activated by ATP to form Asp-AMP and then transferred to the acceptor end of tRNA(Asp/Asn). The sequence is that of Aspartate--tRNA(Asp/Asn) ligase from Jannaschia sp. (strain CCS1).